A 397-amino-acid polypeptide reads, in one-letter code: Bifunctional enzyme IspD/IspF (397 aa).

The tract at residues 1–236 (MSIAAIILAA…LKGMQIFPDI (236 aa)) is 2-C-methyl-D-erythritol 4-phosphate cytidylyltransferase. The tract at residues 237–397 (RTGNGYDVHS…TVIYPGEIPK (161 aa)) is 2-C-methyl-D-erythritol 2,4-cyclodiphosphate synthase. Asp-243 and His-245 together coordinate a divalent metal cation. Residues 243–245 (DVH) and 269–270 (HS) contribute to the 4-CDP-2-C-methyl-D-erythritol 2-phosphate site. His-277 serves as a coordination point for a divalent metal cation. 4-CDP-2-C-methyl-D-erythritol 2-phosphate is bound by residues 291-293 (DIG), 367-370 (TTNE), Phe-374, and Arg-377.

In the N-terminal section; belongs to the IspD/TarI cytidylyltransferase family. IspD subfamily. It in the C-terminal section; belongs to the IspF family. It depends on a divalent metal cation as a cofactor.

It catalyses the reaction 2-C-methyl-D-erythritol 4-phosphate + CTP + H(+) = 4-CDP-2-C-methyl-D-erythritol + diphosphate. The catalysed reaction is 4-CDP-2-C-methyl-D-erythritol 2-phosphate = 2-C-methyl-D-erythritol 2,4-cyclic diphosphate + CMP. Its pathway is isoprenoid biosynthesis; isopentenyl diphosphate biosynthesis via DXP pathway; isopentenyl diphosphate from 1-deoxy-D-xylulose 5-phosphate: step 2/6. It functions in the pathway isoprenoid biosynthesis; isopentenyl diphosphate biosynthesis via DXP pathway; isopentenyl diphosphate from 1-deoxy-D-xylulose 5-phosphate: step 4/6. Functionally, bifunctional enzyme that catalyzes the formation of 4-diphosphocytidyl-2-C-methyl-D-erythritol from CTP and 2-C-methyl-D-erythritol 4-phosphate (MEP) (IspD), and catalyzes the conversion of 4-diphosphocytidyl-2-C-methyl-D-erythritol 2-phosphate (CDP-ME2P) to 2-C-methyl-D-erythritol 2,4-cyclodiphosphate (ME-CPP) with a corresponding release of cytidine 5-monophosphate (CMP) (IspF). In Bartonella bacilliformis (strain ATCC 35685 / KC583 / Herrer 020/F12,63), this protein is Bifunctional enzyme IspD/IspF.